The primary structure comprises 175 residues: ADP-ribosylation factor 6 (175 aa).

G2 carries the N-myristoyl glycine lipid modification. K3 carries the N6-myristoyl lysine lipid modification. Residues 23–28 (AAGKTT), 41–44 (TIPT), 63–67 (DVGGQ), 122–125 (NKQD), and 155–156 (CA) contribute to the GTP site.

The protein belongs to the small GTPase superfamily. Arf family.

Its subcellular location is the cytoplasm. The protein localises to the cytosol. It localises to the cell membrane. The protein resides in the endosome membrane. It is found in the recycling endosome membrane. Its subcellular location is the cell projection. The protein localises to the filopodium membrane. It localises to the ruffle. The protein resides in the cleavage furrow. It is found in the midbody. Its subcellular location is the midbody ring. The protein localises to the golgi apparatus. The enzyme catalyses GTP + H2O = GDP + phosphate + H(+). GTP-binding protein involved in protein trafficking; regulates endocytic recycling and cytoskeleton remodeling. May modulate vesicle budding and uncoating within the Golgi apparatus. May contribute to the regulation of dendritic branching, filopodia extension and dendritic spine development. In Xenopus laevis (African clawed frog), this protein is ADP-ribosylation factor 6 (arf6).